Consider the following 104-residue polypeptide: Complex III assembly factor LYRM7 (104 aa).

This sequence belongs to the complex I LYR family. Interacts with UQCRFS1.

It is found in the mitochondrion matrix. Its function is as follows. Assembly factor required for Rieske Fe-S protein UQCRFS1 incorporation into the cytochrome b-c1 (CIII) complex. Functions as a chaperone, binding to this subunit within the mitochondrial matrix and stabilizing it prior to its translocation and insertion into the late CIII dimeric intermediate within the mitochondrial inner membrane. In Danio rerio (Zebrafish), this protein is Complex III assembly factor LYRM7 (LYRM7).